The sequence spans 1740 residues: MPSETIDSTKQFEFQISDWNSYHELDQEEEEKYVIQLFGRTEDDHDVCLKVTGYTPFFYVEIPKQWKQRQVDKFVEILKNKVQYHCKKNLDEDFDLSKSLIKYAMVKKHKFYNFRNKQLYNFLLLVFKSHTAMKEFSSILARPLEAKGLTNKPMLYQRYESNIEPHIRFMHINNLSSCGWASIDKDKLKKIPEYSNCDYSFSVNWKDVKPSNNDDRMAPFKIMGYDIECVSCDQNFPQAERPSDKIIQIGITMYRYGSMKCYEQHILTLKKCAPIEGVNVECYKKEKGLLRGFAKKIAELRPDFKTGYNNFGFDDKYIYDRILRIDKREGKKQGVNINALKNKFMDEILRTIGKVNNNYLIENEGLDRIPIYTTVKDKKISSKASRFIQIRGGTYVENGNNLKYVQSPGITYFEVKNLSSSALGDNELKFIQIPGVLSIDMMKVIQRDHRLIGYKLDNVSANFITEKADKIIEMPHNQEDSDSEKEDEDTDDKTYDVNIYTKSTKALEKDSYIQIMVNDGYSSSPLSEGAKYKVYDIQTITEKKLNEKTNKEEIFVYQAIKTKICQKDIQQLRETIKNPLLGISWTFAKDDMHHTKINEYFEEGDPKKIRQIAKYCLKDCKLVNLLLAKLEIIVNSVGMAKVCHVPLSYLFLRGQGVKIFSLVSKKCREKNFLIPVLRRKSKDNEGDEDETYEGATVITPKPNVYLSPIGVLDYSSLYPNSMRERNLSQECYVDDSKYDNLPGYIYHDVEIILKDKKGKILRNIDGTPQKEYHRFAQEIITDEQINRELKDIFDKINTVFENNVAIIQNQKYFTEKNISELIDKHKNISDSKIEDIEFDESLSDKRKNKLVDAEKDSLDKNIGFYQKIKSQIDKIKLDSKIEIDNLSKNLNEEEKSKQINKMELNTKNLISKVFSKYLITEQQREELIVLEKERAKRSVNAEKAKVYNTVDGITVRYGILPEILTELLNKRKETNGKLANEKDPFVKAILNALQLAFKVTANSLYGQTGAPTSPLYFIAIAACTTAIGRERLHYAKKTVEDNFPGSEVIYGDSVTGDTPIITRHQNGDINITTIEELGSKWKPYEIFKAHEKNSNRKFKQQSQYPTDSEVWTAKGWAKIKRVIRHKTVKKIYRVLTHTGCIDVTEDHSLLDPNQNIIKPINCQIGTELLHGFPESNNVYDNISEQEAYVWGFFMGDGSCGSYQTKNGIKYSWALNNQDLDVLNKCKKYLEETENIQFKILDTMKSSSVYKLVPIRKIKYMVNKYRKIFYDNKKYKLVPKEILNSTKDIKNSFLEGYYAADGSRKETENMGCRRCDIKGKISAQCLFYLLKSLGYNVSINIRSDKNQIYRLTFSNKKQRKNPIAIKKIQLMNETSNDHDGDYVYDLETESGSFHAGVGEMIVKNTDSIFINFHIKDENGEEKTDKEALMKTIAKCQRAAKLINQNVPKPQSIVYEKTLHPFILVAKKKYVGLLFEKSPDKYFLKSMGIVLKRRDNAPIVKIVVGGIIDNILKNRDIDKAIEYTKIVLDKLMNGEYPMDKFIISKTLKSRYKKPSTIAHKVLADRMAVRDPGNKPQINDRIPFVYIVKDMGKKKKKDILQGDLIEHPEYVIANNLKIDYLYYLEHQIINPASQILELMMDTKDVQKFFNKYIIDEQNKRKGAQSLTKWMDFSKLPKESGSKTAKKPYQSQKLQKTKSSNKSQIDPKYINLIKNKSRKHECQNMNKWISSTDKCTDDWEPIVE.

Residues isoleucine 472 to aspartate 491 are disordered. Over residues aspartate 480–aspartate 491 the composition is skewed to acidic residues. In terms of domain architecture, DOD-type homing endonuclease spans valine 1189 to tyrosine 1334. The segment at proline 1673 to isoleucine 1701 is disordered. A compositionally biased stretch (polar residues) spans tyrosine 1685–glutamine 1700.

It belongs to the DNA polymerase type-B family. In terms of processing, this protein undergoes a protein self splicing that involves a post-translational excision of the intervening region (intein) followed by peptide ligation.

It catalyses the reaction DNA(n) + a 2'-deoxyribonucleoside 5'-triphosphate = DNA(n+1) + diphosphate. This Acanthamoeba polyphaga (Amoeba) protein is DNA polymerase (POLB).